A 344-amino-acid polypeptide reads, in one-letter code: 2,3,4,5-tetrahydropyridine-2,6-dicarboxylate N-succinyltransferase (344 aa).

Glutamate 205 is a Mg(2+) binding site. Glutamate 221 (acyl-anhydride intermediate) is an active-site residue. Succinyl-CoA-binding positions include arginine 223, glycine 238, serine 241, alanine 264, 279-280 (EA), 287-289 (GTK), lysine 304, and 317-320 (RRNS).

Belongs to the type 2 tetrahydrodipicolinate N-succinyltransferase family. As to quaternary structure, homotrimer. Requires Magnesium ions are not essential for catalysis. as cofactor.

The protein resides in the cytoplasm. It catalyses the reaction (S)-2,3,4,5-tetrahydrodipicolinate + succinyl-CoA + H2O = (S)-2-succinylamino-6-oxoheptanedioate + CoA. The protein operates within amino-acid biosynthesis; L-lysine biosynthesis via DAP pathway; LL-2,6-diaminopimelate from (S)-tetrahydrodipicolinate (succinylase route): step 1/3. With respect to regulation, weakly inhibited by D-2-aminopimelate. Catalyzes the conversion of the cyclic tetrahydrodipicolinate (THDP) into the acyclic N-succinyl-L-2-amino-6-oxopimelate using succinyl-CoA. Displays succinyl transferase activity with L-2-aminopimelate and succinyl-CoA as substrates. The protein is 2,3,4,5-tetrahydropyridine-2,6-dicarboxylate N-succinyltransferase of Pseudomonas aeruginosa (strain ATCC 15692 / DSM 22644 / CIP 104116 / JCM 14847 / LMG 12228 / 1C / PRS 101 / PAO1).